A 347-amino-acid chain; its full sequence is Putative phosphoesterase 078R (347 aa).

The a divalent metal cation site is built by Asp-52, Asn-87, and His-211.

This sequence belongs to the metallophosphoesterase superfamily. IIV-6 244L family.

The chain is Putative phosphoesterase 078R from Invertebrate iridescent virus 3 (IIV-3).